Consider the following 350-residue polypeptide: Eukaryotic translation initiation factor 3 subunit I (350 aa).

6 WD repeats span residues 8 to 49, 51 to 89, 91 to 135, 149 to 188, 198 to 240, and 296 to 335; these read GHER…GTLE, HQGV…CVFT, ESPS…ESLT, QDGA…AVNS, EKNV…KVYK, and GHFG…FDFY.

Belongs to the eIF-3 subunit I family. In terms of assembly, component of the eukaryotic translation initiation factor 3 (eIF-3) complex.

Its subcellular location is the cytoplasm. Functionally, component of the eukaryotic translation initiation factor 3 (eIF-3) complex, which is involved in protein synthesis of a specialized repertoire of mRNAs and, together with other initiation factors, stimulates binding of mRNA and methionyl-tRNAi to the 40S ribosome. The eIF-3 complex specifically targets and initiates translation of a subset of mRNAs involved in cell proliferation. This Scheffersomyces stipitis (strain ATCC 58785 / CBS 6054 / NBRC 10063 / NRRL Y-11545) (Yeast) protein is Eukaryotic translation initiation factor 3 subunit I.